We begin with the raw amino-acid sequence, 736 residues long: Polyribonucleotide nucleotidyltransferase (736 aa).

Positions 488 and 494 each coordinate Mg(2+). A KH domain is found at 555-614 (PMVQTLEIQKEKIRDVIGLGGKVIKELCKTFDVEIDISENGEVKVWGNVGENVKKAVQSI). Residues 624–692 (GDIFDGEVVK…HKNRVKLTLR (69 aa)) form the S1 motif domain.

It belongs to the polyribonucleotide nucleotidyltransferase family. The cofactor is Mg(2+).

The protein resides in the cytoplasm. The enzyme catalyses RNA(n+1) + phosphate = RNA(n) + a ribonucleoside 5'-diphosphate. Its function is as follows. Involved in mRNA degradation. Catalyzes the phosphorolysis of single-stranded polyribonucleotides processively in the 3'- to 5'-direction. This Orientia tsutsugamushi (strain Ikeda) (Rickettsia tsutsugamushi) protein is Polyribonucleotide nucleotidyltransferase.